The following is a 526-amino-acid chain: Na(+)/H(+) antiporter NhaB (526 aa).

12 helical membrane passes run 25-45 (ILLF…IAGW), 52-72 (IFTL…LLAI), 89-109 (LVAN…IYFM), 130-164 (LSLA…FYAI), 204-224 (LMMH…VGEP), 242-262 (IRMS…CVLV), 307-327 (IALW…LIGL), 350-370 (QEAL…AVII), 391-411 (LALF…VFVG), 448-468 (VATP…LAPL), 479-499 (MALP…EMLL), and 505-525 (WFYQ…LPVL).

It belongs to the NhaB Na(+)/H(+) (TC 2.A.34) antiporter family.

It localises to the cell inner membrane. The catalysed reaction is 2 Na(+)(in) + 3 H(+)(out) = 2 Na(+)(out) + 3 H(+)(in). Na(+)/H(+) antiporter that extrudes sodium in exchange for external protons. The chain is Na(+)/H(+) antiporter NhaB from Aeromonas hydrophila subsp. hydrophila (strain ATCC 7966 / DSM 30187 / BCRC 13018 / CCUG 14551 / JCM 1027 / KCTC 2358 / NCIMB 9240 / NCTC 8049).